Reading from the N-terminus, the 86-residue chain is Large ribosomal subunit protein bL27 (86 aa).

The tract at residues 1–31 (MAHKKAGGSSRNGRDSAGQRRGVKKFGGEPV) is disordered.

This sequence belongs to the bacterial ribosomal protein bL27 family.

The sequence is that of Large ribosomal subunit protein bL27 from Desulfotalea psychrophila (strain LSv54 / DSM 12343).